The chain runs to 34 residues: Photosystem II reaction center protein M (34 aa).

A helical membrane pass occupies residues 7 to 27; sequence GFLATLLFVAVPMLFLIGLYI.

Belongs to the PsbM family. As to quaternary structure, PSII is composed of 1 copy each of membrane proteins PsbA, PsbB, PsbC, PsbD, PsbE, PsbF, PsbH, PsbI, PsbJ, PsbK, PsbL, PsbM, PsbT, PsbX, PsbY, Psb30/Ycf12, peripheral proteins PsbO, CyanoQ (PsbQ), PsbU, PsbV and a large number of cofactors. It forms dimeric complexes.

It localises to the cellular thylakoid membrane. Functionally, one of the components of the core complex of photosystem II (PSII). PSII is a light-driven water:plastoquinone oxidoreductase that uses light energy to abstract electrons from H(2)O, generating O(2) and a proton gradient subsequently used for ATP formation. It consists of a core antenna complex that captures photons, and an electron transfer chain that converts photonic excitation into a charge separation. This subunit is found at the monomer-monomer interface. The polypeptide is Photosystem II reaction center protein M (Prochlorococcus marinus (strain MIT 9303)).